Here is a 306-residue protein sequence, read N- to C-terminus: Secreted RxLR effector protein 76 (306 aa).

Positions 1–21 are cleaved as a signal peptide; it reads MSGAFYVFTALLLVASDQIAA. The RxLR-dEER signature appears at 48-65; sequence RFLRGSRDEPDNLANEER. The interval 105–142 is disordered; sequence AAKAVKKRPRGAKAGRKMPRAAEAEAVKKVPRAGTAVK. The segment covering 107–123 has biased composition (basic residues); the sequence is KAVKKRPRGAKAGRKMP.

This sequence belongs to the RxLR effector family.

The protein localises to the secreted. It localises to the host nucleus. Functionally, secreted effector that partially suppresses the host cell death induced by cell death-inducing proteins. The chain is Secreted RxLR effector protein 76 from Plasmopara viticola (Downy mildew of grapevine).